A 296-amino-acid polypeptide reads, in one-letter code: NAD kinase (296 aa).

Asp-72 functions as the Proton acceptor in the catalytic mechanism. NAD(+) is bound by residues 72–73, 146–147, Arg-157, Lys-174, Asp-176, 187–192, and Gln-247; these read DG, ND, and TAYALS.

The protein belongs to the NAD kinase family. A divalent metal cation serves as cofactor.

The protein localises to the cytoplasm. The enzyme catalyses NAD(+) + ATP = ADP + NADP(+) + H(+). Functionally, involved in the regulation of the intracellular balance of NAD and NADP, and is a key enzyme in the biosynthesis of NADP. Catalyzes specifically the phosphorylation on 2'-hydroxyl of the adenosine moiety of NAD to yield NADP. This chain is NAD kinase, found in Pseudomonas fluorescens (strain SBW25).